The chain runs to 244 residues: UPF0280 protein Msp_1322 (244 aa).

This sequence belongs to the UPF0280 family.

This chain is UPF0280 protein Msp_1322, found in Methanosphaera stadtmanae (strain ATCC 43021 / DSM 3091 / JCM 11832 / MCB-3).